The sequence spans 564 residues: Keratin, type II cytoskeletal 6A (564 aa).

Over residues 1–11 (MASTSTTIRSH) the composition is skewed to low complexity. The disordered stretch occupies residues 1-23 (MASTSTTIRSHSSSRRGFSANSA). A2 carries the post-translational modification N-acetylalanine. The tract at residues 2-162 (ASTSTTIRSH…DPTIQRVRAE (161 aa)) is head. Residues 163–198 (EREQIKTLNNKFASFIDKVRFLEQQNKVLETKWTLL) form a coil 1A region. The region spanning 163-476 (EREQIKTLNN…KLLEGEECRL (314 aa)) is the IF rod domain. A linker 1 region spans residues 199 to 217 (QEQGTKTVRQNLEPLFEQY). The segment at 218 to 309 (INNLRRQLDS…ALYDAELSQM (92 aa)) is coil 1B. The linker 12 stretch occupies residues 310–333 (QTHISDTSVVLSMDNNRNLDLDSI). A coil 2 region spans residues 334–472 (IAEVKAQYEE…ATYRKLLEGE (139 aa)). The tract at residues 473–564 (ECRLNGEGVG…SSSSRKSYKH (92 aa)) is tail.

The protein belongs to the intermediate filament family. Heterodimer of a type I and a type II keratin. KRT6 isomers associate with KRT16 and/or KRT17. Interacts with TCHP. Expressed in the corneal epithelium (at protein level).

Functionally, epidermis-specific type I keratin involved in wound healing. Involved in the activation of follicular keratinocytes after wounding, while it does not play a major role in keratinocyte proliferation or migration. Participates in the regulation of epithelial migration by inhibiting the activity of SRC during wound repair. This Homo sapiens (Human) protein is Keratin, type II cytoskeletal 6A (KRT6A).